A 362-amino-acid chain; its full sequence is Probable dual-specificity RNA methyltransferase RlmN (362 aa).

The active-site Proton acceptor is the E105. Residues 111–344 (HEYGNSICVT…VTIRREQGHD (234 aa)) enclose the Radical SAM core domain. C118 and C349 are oxidised to a cystine. [4Fe-4S] cluster contacts are provided by C125, C129, and C132. S-adenosyl-L-methionine-binding positions include 175–176 (GE), S207, 230–232 (SLH), and N306. The active-site S-methylcysteine intermediate is C349.

This sequence belongs to the radical SAM superfamily. RlmN family. [4Fe-4S] cluster is required as a cofactor.

It localises to the cytoplasm. It carries out the reaction adenosine(2503) in 23S rRNA + 2 reduced [2Fe-2S]-[ferredoxin] + 2 S-adenosyl-L-methionine = 2-methyladenosine(2503) in 23S rRNA + 5'-deoxyadenosine + L-methionine + 2 oxidized [2Fe-2S]-[ferredoxin] + S-adenosyl-L-homocysteine. The catalysed reaction is adenosine(37) in tRNA + 2 reduced [2Fe-2S]-[ferredoxin] + 2 S-adenosyl-L-methionine = 2-methyladenosine(37) in tRNA + 5'-deoxyadenosine + L-methionine + 2 oxidized [2Fe-2S]-[ferredoxin] + S-adenosyl-L-homocysteine. Its function is as follows. Specifically methylates position 2 of adenine 2503 in 23S rRNA and position 2 of adenine 37 in tRNAs. The chain is Probable dual-specificity RNA methyltransferase RlmN from Bacillus anthracis (strain A0248).